The primary structure comprises 296 residues: Arginase (296 aa).

4 residues coordinate Mn(2+): His-98, Asp-124, His-126, and Asp-128. Residues Asn-130, Ser-137, and Asp-178 each coordinate L-arginine. Mn(2+) contacts are provided by Asp-225 and Asp-227. Residues Asp-227 and Thr-239 each coordinate L-arginine.

This sequence belongs to the arginase family. In terms of assembly, monomer. Homodimer; dimerization is dispensable for catalytic activity. The cofactor is Mn(2+).

It catalyses the reaction L-arginine + H2O = urea + L-ornithine. It functions in the pathway nitrogen metabolism; urea cycle; L-ornithine and urea from L-arginine: step 1/1. Substitution of the loosely bound surface exposed Mn(2+) with Mg(2+), Zn(2+), Ni(2+) or Co(2+) results in similar catalytic activity, substitution with Cd(2+) and Cu(2+) reduces catalytic activity and substitution with Hg(2+) and Ca(2+) inhibits the enzyme. Inhibited by L-norvaline. Catalyzes the hydrolysis of L-arginine into urea and L-ornithine, which is a precursor for polyamine biosynthesis. By depleting host L-arginine, a substrate for nitric oxide synthase (NOS), prevents the production of nitric oxide (NO) by host activated macrophages, and thus allows the parasite to evade host immune response. In Entamoeba histolytica (strain ATCC 30459 / HM-1:IMSS / ABRM), this protein is Arginase.